A 274-amino-acid chain; its full sequence is Putative 2-succinyl-6-hydroxy-2,4-cyclohexadiene-1-carboxylate synthase (274 aa).

In terms of domain architecture, AB hydrolase-1 spans 26-259; the sequence is AVVCLHGFTG…KAGHTVHVEQ (234 aa).

Belongs to the AB hydrolase superfamily. MenH family. Monomer.

The catalysed reaction is 5-enolpyruvoyl-6-hydroxy-2-succinyl-cyclohex-3-ene-1-carboxylate = (1R,6R)-6-hydroxy-2-succinyl-cyclohexa-2,4-diene-1-carboxylate + pyruvate. Its pathway is quinol/quinone metabolism; 1,4-dihydroxy-2-naphthoate biosynthesis; 1,4-dihydroxy-2-naphthoate from chorismate: step 3/7. It participates in quinol/quinone metabolism; menaquinone biosynthesis. Functionally, catalyzes a proton abstraction reaction that results in 2,5-elimination of pyruvate from 2-succinyl-5-enolpyruvyl-6-hydroxy-3-cyclohexene-1-carboxylate (SEPHCHC) and the formation of 2-succinyl-6-hydroxy-2,4-cyclohexadiene-1-carboxylate (SHCHC). The polypeptide is Putative 2-succinyl-6-hydroxy-2,4-cyclohexadiene-1-carboxylate synthase (Bacillus subtilis (strain 168)).